The chain runs to 196 residues: MYPVPTVIEQSSRGERAYDIYSRLLKDRIIMLSGPIEDNMANAIIAQLLFLDAQDSGKDIYLYINSPGGVVTAGLAIYDTMNFIKSDVQTIVMGMAASMASVLASSGTKGKRFALPNSEILIHQPSGGAQGQQTEIEIVAEEILKTRKKINQILADNSGQSVEKLNHDTERDNYLSAQEAKDYGLIDDIMENNKLK.

The Nucleophile role is filled by S98. The active site involves H123.

It belongs to the peptidase S14 family. In terms of assembly, fourteen ClpP subunits assemble into 2 heptameric rings which stack back to back to give a disk-like structure with a central cavity, resembling the structure of eukaryotic proteasomes.

The protein localises to the cytoplasm. It carries out the reaction Hydrolysis of proteins to small peptides in the presence of ATP and magnesium. alpha-casein is the usual test substrate. In the absence of ATP, only oligopeptides shorter than five residues are hydrolyzed (such as succinyl-Leu-Tyr-|-NHMec, and Leu-Tyr-Leu-|-Tyr-Trp, in which cleavage of the -Tyr-|-Leu- and -Tyr-|-Trp bonds also occurs).. In terms of biological role, cleaves peptides in various proteins in a process that requires ATP hydrolysis. Has a chymotrypsin-like activity. Plays a major role in the degradation of misfolded proteins. The chain is ATP-dependent Clp protease proteolytic subunit from Lactiplantibacillus plantarum (strain ATCC BAA-793 / NCIMB 8826 / WCFS1) (Lactobacillus plantarum).